Reading from the N-terminus, the 395-residue chain is MAKAKFERSKPHVNIGTIGHVDHGKTTLTAAITTVLAKAGGAEARGYDQIDAAPEERERGITISTAHVEYETETRHYAHVDCPGHADYVKNMITGAAQMDGGILVVSAADGPMPQTREHILLSRQVGVPYIVVFLNKCDMVDDEELLELVEMEVRDLLSEYGFPGDDIPVIKGSALKALQGEADWEAKIIELMTEVDAYIPTPERETDKPFLMPIEDVFSITGRGTVATGRVERGIVKVGDVVEIIGLAEENASTTVTGVEMFRKLLDQAQAGDNIGALLRGVAREDIQRGQVLAKTGSVKAHAKFKAEVFVLSKEEGGRHTPFFANYRPQFYFRTTDVTGIIQLPEGTEMVMPGDNIEMTIELIAPIAIEEGTKFSIREGGRTVGYGVVATIVE.

Residues 10 to 204 (KPHVNIGTIG…EVDAYIPTPE (195 aa)) enclose the tr-type G domain. Residues 19–26 (GHVDHGKT) are G1. Position 19–26 (19–26 (GHVDHGKT)) interacts with GTP. Position 26 (Thr-26) interacts with Mg(2+). A G2 region spans residues 60 to 64 (GITIS). Positions 81 to 84 (DCPG) are G3. Residues 81-85 (DCPGH) and 136-139 (NKCD) contribute to the GTP site. Positions 136–139 (NKCD) are G4. The tract at residues 174–176 (SAL) is G5.

It belongs to the TRAFAC class translation factor GTPase superfamily. Classic translation factor GTPase family. EF-Tu/EF-1A subfamily. Monomer.

The protein localises to the cytoplasm. It catalyses the reaction GTP + H2O = GDP + phosphate + H(+). In terms of biological role, GTP hydrolase that promotes the GTP-dependent binding of aminoacyl-tRNA to the A-site of ribosomes during protein biosynthesis. The chain is Elongation factor Tu from Bacillus cereus (strain G9842).